The following is a 734-amino-acid chain: Photosystem I P700 chlorophyll a apoprotein A2 (734 aa).

Transmembrane regions (helical) follow at residues 46–69 (IFASHFGHLAIIFLWTSGNLFHVA), 135–158 (LYTGALFLLVLSAILLFGGWLHLQ), 175–199 (LNHHLSGLFGVSSLAWTGHLVHVAI), 273–291 (MAHHHLAIAVVFIVAGHMY), 330–353 (LHMQLGLALAALGVITSLVAQHMY), 369–395 (ASLYTHHQYIAGFLMVGAFAHGAIFFV), 417–439 (AIISHLSWVTLFLGFHTLGLYVH), and 517–535 (FLVHHAIALGLHTTALILV). [4Fe-4S] cluster is bound by residues Cys559 and Cys568. 2 helical membrane passes run 575–596 (AFYLAVFWMLNTIGWVTFYWHW) and 643–665 (LSVWSWMFLFGHLVWATGFMFLI). His654, Met662, and Tyr670 together coordinate chlorophyll a. Trp671 is a binding site for phylloquinone. Residues 707 to 727 (LVGLAHFSVGYVLTYAAFVLA) form a helical membrane-spanning segment.

The protein belongs to the PsaA/PsaB family. As to quaternary structure, the PsaA/B heterodimer binds the P700 chlorophyll special pair and subsequent electron acceptors. PSI consists of a core antenna complex that captures photons, and an electron transfer chain that converts photonic excitation into a charge separation. The eukaryotic PSI reaction center is composed of at least 11 subunits. Requires P700 is a chlorophyll a/chlorophyll a' dimer, A0 is one or more chlorophyll a, A1 is one or both phylloquinones and FX is a shared 4Fe-4S iron-sulfur center. as cofactor.

Its subcellular location is the plastid. It localises to the chloroplast thylakoid membrane. It catalyses the reaction reduced [plastocyanin] + hnu + oxidized [2Fe-2S]-[ferredoxin] = oxidized [plastocyanin] + reduced [2Fe-2S]-[ferredoxin]. PsaA and PsaB bind P700, the primary electron donor of photosystem I (PSI), as well as the electron acceptors A0, A1 and FX. PSI is a plastocyanin/cytochrome c6-ferredoxin oxidoreductase, converting photonic excitation into a charge separation, which transfers an electron from the donor P700 chlorophyll pair to the spectroscopically characterized acceptors A0, A1, FX, FA and FB in turn. Oxidized P700 is reduced on the lumenal side of the thylakoid membrane by plastocyanin or cytochrome c6. This Porphyra purpurea (Red seaweed) protein is Photosystem I P700 chlorophyll a apoprotein A2.